The following is a 72-amino-acid chain: UPF0346 protein GK1571 (72 aa).

Belongs to the UPF0346 family.

This Geobacillus kaustophilus (strain HTA426) protein is UPF0346 protein GK1571.